Reading from the N-terminus, the 1977-residue chain is Voltage-dependent L-type calcium channel subunit alpha-1F (1977 aa).

A compositionally biased stretch (basic and acidic residues) spans 1–11 (MSESEGGKDTT). Positions 1–60 (MSESEGGKDTTPEPSPANGAGPGPEWGLCPGPPAVEGESSGASGLGTPKRRNQHSKHKTV) are disordered. The Cytoplasmic segment spans residues 1 to 92 (MSESEGGKDT…RSCISIVEWK (92 aa)). A compositionally biased stretch (basic residues) spans 48 to 59 (PKRRNQHSKHKT). An I repeat occupies 79-375 (NPLRRSCISI…LVLGVLSGEF (297 aa)). The chain crosses the membrane as a helical span at residues 93-111 (PFDILILLTIFANCVALGV). Residues 112–129 (YIPFPEDDSNTANHNLEQ) are Extracellular-facing. The chain crosses the membrane as a helical span at residues 130 to 149 (VEYVFLVIFTVETVLKIVAY). Topologically, residues 150–161 (GLVLHPSAYIRN) are cytoplasmic. A helical membrane pass occupies residues 162 to 180 (GWNLLDFIIVVVGLFSVLL). Residues 181-201 (EQGPGRPGDAPHTGGKPGGFD) are Extracellular-facing. Residues 202 to 220 (VKALRAFRVLRPLRLVSGV) form a helical membrane-spanning segment. At 221–239 (PSLHIVLNSIMKALVPLLH) the chain is on the cytoplasmic side. A helical transmembrane segment spans residues 240–259 (IALLVLFVIIIYAIIGLELF). Topologically, residues 260–347 (LGRMHKTCYF…WMQDAMGYEL (88 aa)) are extracellular. Residue asparagine 295 is glycosylated (N-linked (GlcNAc...) asparagine). Glutamate 330 is a Ca(2+) binding site. A helical transmembrane segment spans residues 348–372 (PWVYFVSLVIFGSFFVLNLVLGVLS). At 373 to 529 (GEFSKEREKA…ARCRRAVKSN (157 aa)) the chain is on the cytoplasmic side. The tract at residues 395-412 (QQMEEDLRGYLDWITQAE) is binding to the beta subunit. Disordered regions lie at residues 418-441 (DPSA…PQLA) and 455-488 (SHST…EDEE). Residues 455-469 (SHSTRSTHSTSSHAS) are compositionally biased toward low complexity. The II repeat unit spans residues 515 to 761 (NRVLRARCRR…VFLAIAVDNL (247 aa)). A helical membrane pass occupies residues 530 to 549 (ACYWAVLLLVFLNTLTIASE). Over 550 to 564 (HHGQPVWLTQIQEYA) the chain is Extracellular. The helical transmembrane segment at 565 to 583 (NKVLLCLFTVEMLLKLYGL) threads the bilayer. Over 584-591 (GPSAYVSS) the chain is Cytoplasmic. Residues 592 to 610 (FFNRFDCFVVCGGILETTL) traverse the membrane as a helical segment. Residues 611-620 (VEVGAMQPLG) lie on the Extracellular side of the membrane. A helical membrane pass occupies residues 621-639 (ISVLRCVRLLRIFKVTRHW). The Cytoplasmic segment spans residues 640-658 (ASLSNLVASLLNSMKSIAS). Residues 659-679 (LLLLLFLFIIIFSLLGMQLFG) form a helical membrane-spanning segment. Over 680 to 733 (GKFNFDQTHTKRSTFDTFPQALLTVFQILTGEDWNVVMYDGIMAYGGPFFPGML) the chain is Extracellular. Position 711 (glutamate 711) interacts with Ca(2+). The helical transmembrane segment at 734–758 (VCIYFIILFICGNYILLNVFLAIAV) threads the bilayer. Over 759–871 (DNLASGDAGT…KGCHTLIHHH (113 aa)) the chain is Cytoplasmic. The tract at residues 767–830 (GTAKDKGGEK…EEEEEGAGGV (64 aa)) is disordered. The segment covering 768-783 (TAKDKGGEKSNEKDLP) has biased composition (basic and acidic residues). Over residues 807–826 (DMEEEEEEEEEEEEEEEEEG) the composition is skewed to acidic residues. An III repeat occupies 858–1140 (NPLRKGCHTL…IFVGFVIITF (283 aa)). The helical transmembrane segment at 872-890 (VFTNLILVFIILSSVSLAA) threads the bilayer. Over 891-906 (EDPIRAHSFRNHILGY) the chain is Extracellular. Residues 907–926 (FDYAFTSIFTVEILLKMTVF) traverse the membrane as a helical segment. The Cytoplasmic segment spans residues 927–938 (GAFLHRGSFCRS). Residues 939–957 (WFNMLDLLVVSVSLISFGI) form a helical membrane-spanning segment. At 958 to 963 (HSSAIS) the chain is on the extracellular side. The chain crosses the membrane as a helical span at residues 964–983 (VVKILRVLRVLRPLRAINRA). Residues 984–1002 (KGLKHVVQCVFVAIRTIGN) lie on the Cytoplasmic side of the membrane. A helical membrane pass occupies residues 1003 to 1022 (IMIVTTLLQFMFACIGVQLF). Over 1023–1112 (KGKFYTCTDE…HGPIYNYRVE (90 aa)) the chain is Extracellular. Residues 1060 to 1150 (RLWVNSDFNF…RAQGEQEYQN (91 aa)) form a dihydropyridine binding region. Ca(2+) is bound at residue glutamate 1086. A helical transmembrane segment spans residues 1113–1133 (ISVFFIVYIIIIAFFMMNIFV). Topologically, residues 1134–1190 (GFVIITFRAQGEQEYQNCELDKNQRQCVEYALKAQPLRRYIPKNPHQYRVWATVNSA) are cytoplasmic. One copy of the IV repeat lies at 1177 to 1444 (NPHQYRVWAT…LFVAVIMDNF (268 aa)). Residues 1191-1209 (AFEYLMFLLILLNTVALAM) form a helical membrane-spanning segment. Residues 1210 to 1224 (QHYEQTAPFNYAMDI) are Extracellular-facing. Residues 1225–1244 (LNMVFTGLFTIEMVLKIIAF) form a helical membrane-spanning segment. The Cytoplasmic portion of the chain corresponds to 1245–1251 (KPKHYFT). Residues 1252–1273 (DAWNTFDALIVVGSIVDIAVTE) traverse the membrane as a helical segment. Topologically, residues 1274–1290 (VNNGGHLGESSEDSSRI) are extracellular. The helical transmembrane segment at 1291-1310 (SITFFRLFRVMRLVKLLSKG) threads the bilayer. Over 1311-1329 (EGIRTLLWTFIKSFQALPY) the chain is Cytoplasmic. A helical transmembrane segment spans residues 1330–1349 (VALLIAMIFFIYAVIGMQMF). At 1350–1416 (GKVALQDGTQ…GEEFTCGSNF (67 aa)) the chain is on the extracellular side. Residues 1397–1463 (RCDPESDFGP…LGPHHLDEFK (67 aa)) are dihydropyridine binding. Residues 1409 to 1452 (EFTCGSNFAIAYFISFFMLCAFLIINLFVAVIMDNFDYLTRDWS) are phenylalkylamine binding. A helical membrane pass occupies residues 1417-1441 (AIAYFISFFMLCAFLIINLFVAVIM). The Cytoplasmic segment spans residues 1442-1977 (DNFDYLTRDW…GDEMACVHAL (536 aa)). Disordered stretches follow at residues 1637-1754 (CDTE…EVPD) and 1816-1841 (DLPI…WATP). Acidic residues predominate over residues 1638-1657 (DTEEEEEEGQEGVEEEDEKD). 4 stretches are compositionally biased toward polar residues: residues 1661-1670 (NKATMVSQPS), 1702-1716 (TPTS…AGSN), 1733-1743 (GNSQPKGTKGQ), and 1829-1840 (SGPNRAQGSWAT).

This sequence belongs to the calcium channel alpha-1 subunit (TC 1.A.1.11) family. CACNA1F subfamily. As to quaternary structure, voltage-dependent calcium channels are multisubunit complexes, consisting of alpha-1, alpha-2, beta and delta subunits in a 1:1:1:1 ratio. The channel activity is directed by the pore-forming and voltage-sensitive alpha-1 subunit. In many cases, this subunit is sufficient to generate voltage-sensitive calcium channel activity. The auxiliary subunits beta and alpha-2/delta linked by a disulfide bridge regulate the channel activity. Interacts (via IQ domain) with CABP4; in a calcium independent manner. In terms of assembly, interacts with CABP4; suppresses robust calcium-dependent inactivation of channel without enhancing the hyperpolarized voltage-dependent activation. In terms of tissue distribution, expression in skeletal muscle and retina. Isoform 4 is expressed in retina.

Its subcellular location is the membrane. The catalysed reaction is Ca(2+)(in) = Ca(2+)(out). Its function is as follows. Voltage-sensitive calcium channels (VSCC) mediate the entry of calcium ions into excitable cells and are also involved in a variety of calcium-dependent processes, including muscle contraction, hormone or neurotransmitter release, gene expression, cell motility, cell division and cell death. The isoform alpha-1F gives rise to L-type calcium currents. Long-lasting (L-type) calcium channels belong to the 'high-voltage activated' (HVA) group. They are blocked by dihydropyridines (DHP), phenylalkylamines, and by benzothiazepines. Activates at more negative voltages and does not undergo calcium-dependent inactivation (CDI), due to incoming calcium ions, during depolarization. Voltage-dependent L-type calcium channel activates at more hyperpolarized voltages and exhibits a robust calcium-dependent inactivation (CDI), due to incoming calcium ions, during depolarizations. Functionally, voltage-sensitive calcium channels (VSCC) mediate the entry of calcium ions into excitable cells and are also involved in a variety of calcium-dependent processes, including muscle contraction, hormone or neurotransmitter release, gene expression, cell motility, cell division and cell death. This chain is Voltage-dependent L-type calcium channel subunit alpha-1F, found in Homo sapiens (Human).